We begin with the raw amino-acid sequence, 472 residues long: Glutamate--tRNA ligase (472 aa).

Residues 10–20 (PSPTGYLHVGG) carry the 'HIGH' region motif. Zn(2+) is bound by residues C99, C101, C126, and D128. The short motif at 238-242 (KLSKR) is the 'KMSKS' region element. K241 contributes to the ATP binding site.

This sequence belongs to the class-I aminoacyl-tRNA synthetase family. Glutamate--tRNA ligase type 1 subfamily. In terms of assembly, monomer. Requires Zn(2+) as cofactor.

Its subcellular location is the cytoplasm. The enzyme catalyses tRNA(Glu) + L-glutamate + ATP = L-glutamyl-tRNA(Glu) + AMP + diphosphate. Its function is as follows. Catalyzes the attachment of glutamate to tRNA(Glu) in a two-step reaction: glutamate is first activated by ATP to form Glu-AMP and then transferred to the acceptor end of tRNA(Glu). In Photorhabdus laumondii subsp. laumondii (strain DSM 15139 / CIP 105565 / TT01) (Photorhabdus luminescens subsp. laumondii), this protein is Glutamate--tRNA ligase.